Here is a 314-residue protein sequence, read N- to C-terminus: MTDATVPTFDLAELREGLHQEEFRHCLREKGVFYLKGTGLPAEADHASGREIAVDFFDHGTEAEKKAVMTPIPTIRRGYAGLESESTAQITNTGKYTDYSMSYSMGTADNLFPSAEFEKAWEDYFARMYRASQDVARQVLTSVGAEPEVGMDAFLDCEPLLRLRYFPEVPEDRVAEEQPLRMAPHYDLSIVTLIHQTPCANGFVSLQVEVDGSYVDIPAQPGAVLVFCGAVATLVADGAIKAPKHHVAAPGADKRVGSSRTSSVFFLRPNGDFRFSVPRARECGFDVSIPAETATFDDWIGGNYINIRKTAAAR.

In terms of domain architecture, Fe2OG dioxygenase spans 156–269 (DCEPLLRLRY…RTSSVFFLRP (114 aa)).

This sequence belongs to the iron/ascorbate-dependent oxidoreductase family. Fe cation is required as a cofactor. L-ascorbate serves as cofactor.

It catalyses the reaction penicillin N + 2-oxoglutarate + O2 = deacetoxycephalosporin C + succinate + CO2 + H2O. The protein operates within antibiotic biosynthesis; cephalosporin C biosynthesis. In terms of biological role, catalyzes the step from penicillin N to deacetoxy-cephalosporin C. The polypeptide is Deacetoxycephalosporin C synthase (cefE) (Amycolatopsis lactamdurans (Nocardia lactamdurans)).